The primary structure comprises 415 residues: Serine hydroxymethyltransferase (415 aa).

(6S)-5,6,7,8-tetrahydrofolate contacts are provided by residues Leu119 and 123 to 125; that span reads GHL. An N6-(pyridoxal phosphate)lysine modification is found at Lys228. Residue 353–355 participates in (6S)-5,6,7,8-tetrahydrofolate binding; sequence SAF.

It belongs to the SHMT family. Homodimer. Requires pyridoxal 5'-phosphate as cofactor.

The protein resides in the cytoplasm. The catalysed reaction is (6R)-5,10-methylene-5,6,7,8-tetrahydrofolate + glycine + H2O = (6S)-5,6,7,8-tetrahydrofolate + L-serine. The protein operates within one-carbon metabolism; tetrahydrofolate interconversion. It functions in the pathway amino-acid biosynthesis; glycine biosynthesis; glycine from L-serine: step 1/1. Functionally, catalyzes the reversible interconversion of serine and glycine with tetrahydrofolate (THF) serving as the one-carbon carrier. Also exhibits THF-independent aldolase activity toward beta-hydroxyamino acids, producing glycine and aldehydes, via a retro-aldol mechanism. The chain is Serine hydroxymethyltransferase from Halobacterium salinarum (strain ATCC 29341 / DSM 671 / R1).